We begin with the raw amino-acid sequence, 103 residues long: Matrix Gla protein (103 aa).

The signal sequence occupies residues 1 to 19 (MKSLVLLAILAALAVVTLC). Glu21 is modified (4-carboxyglutamate). Phosphoserine is present on residues Ser22, Ser25, and Ser28. The Gla domain occupies 51–97 (RAKVQERIRERSKPVHELNREACDDYRLCERYAMVYGYNAAYNRYFR). A 4-carboxyglutamate mark is found at Glu56, Glu60, Glu67, and Glu71. An intrachain disulfide couples Cys73 to Cys79. The propeptide at 97–103 (RERRGAK) is removed in mature form; probably by carboxypeptidase N.

It belongs to the osteocalcin/matrix Gla protein family. Post-translationally, requires vitamin K-dependent gamma-carboxylation for its function.

The protein localises to the secreted. Functionally, associates with the organic matrix of bone and cartilage. Thought to act as an inhibitor of bone formation. In Pongo abelii (Sumatran orangutan), this protein is Matrix Gla protein (MGP).